The chain runs to 89 residues: Mu-theraphotoxin-Phlo1a (89 aa).

Residues 1–22 form the signal peptide; sequence MKVSVLITLAVLGVMFVWTSAA. Positions 23 to 52 are excised as a propeptide; sequence EQEDHGSDRRDSPALLKNLLGEEVFQSEER. 3 disulfides stabilise this stretch: Cys54/Cys68, Cys61/Cys73, and Cys67/Cys81. Ile87 carries the isoleucine amide modification.

The protein belongs to the neurotoxin 10 (Hwtx-1) family. 39 (Jztx-34) subfamily. Expressed by the venom gland.

The protein localises to the secreted. Its function is as follows. Gating-modifier toxin that inhibits voltage-gated sodium channel Nav by shifting the threshold for channel activation to more positive potentials. This toxin moderately inhibits human Nav1.7/SCN9A (IC(50)=459 nM) and weakly inhibits hNav1.2/SCN2A and hNav1.5/SCN5A (&lt;20% inhibition at 1 uM peptide). Inhibition of Nav1.7 is voltage-dependent, with lower inhibition at more positive test pulses. The chain is Mu-theraphotoxin-Phlo1a from Phlogius sp. (Tarantula spider).